The following is a 133-amino-acid chain: Nickel-responsive regulator (133 aa).

Ni(2+) is bound by residues His-76, His-87, His-89, and Cys-95.

This sequence belongs to the transcriptional regulatory CopG/NikR family. In terms of assembly, homotetramer. It depends on Ni(2+) as a cofactor.

Transcriptional repressor of the nikABCDE operon. Is active in the presence of excessive concentrations of intracellular nickel. The sequence is that of Nickel-responsive regulator from Escherichia coli (strain SMS-3-5 / SECEC).